A 65-amino-acid chain; its full sequence is Muscarinic toxin-like protein 3 (65 aa).

4 disulfides stabilise this stretch: C3/C24, C17/C41, C45/C57, and C58/C63.

In terms of assembly, homodimer; non-covalently linked. In terms of tissue distribution, expressed by the venom gland.

Its subcellular location is the secreted. In terms of biological role, antagonist of muscle and neuronal nicotinic acetylcholine receptors (nAChR) with highest affinity for neuronal alpha-7/CHRNA7 nAChRs. In Naja kaouthia (Monocled cobra), this protein is Muscarinic toxin-like protein 3.